The following is a 163-amino-acid chain: Phosphopantetheine adenylyltransferase (163 aa).

Residue Ser-9 participates in substrate binding. ATP is bound by residues 9 to 10 and His-17; that span reads SF. Substrate is bound by residues Lys-41, Ile-75, and Arg-89. ATP is bound by residues 90 to 92, Glu-100, and 125 to 131; these read GIR and HLYVRSD.

The protein belongs to the bacterial CoaD family. In terms of assembly, homohexamer. Requires Mg(2+) as cofactor.

Its subcellular location is the cytoplasm. The enzyme catalyses (R)-4'-phosphopantetheine + ATP + H(+) = 3'-dephospho-CoA + diphosphate. The protein operates within cofactor biosynthesis; coenzyme A biosynthesis; CoA from (R)-pantothenate: step 4/5. Its function is as follows. Reversibly transfers an adenylyl group from ATP to 4'-phosphopantetheine, yielding dephospho-CoA (dPCoA) and pyrophosphate. The polypeptide is Phosphopantetheine adenylyltransferase (Borrelia garinii subsp. bavariensis (strain ATCC BAA-2496 / DSM 23469 / PBi) (Borreliella bavariensis)).